A 374-amino-acid polypeptide reads, in one-letter code: Spore germination protein B3 (374 aa).

The N-terminal stretch at 1–19 (MKTASKFSVMFFMLLALCG) is a signal peptide. Cys-20 carries N-palmitoyl cysteine lipidation. The S-diacylglycerol cysteine moiety is linked to residue Cys-20.

The protein belongs to the GerABKC lipoprotein family.

The protein resides in the cell membrane. Involved in the response to the germinative mixture of L-asparagine, glucose, fructose and potassium ions (AGFK). Cannot stimulate germination in the absence of gerD and gerK gene products (fructose and glucose receptors respectively). The sequence is that of Spore germination protein B3 (gerBC) from Bacillus subtilis (strain 168).